Reading from the N-terminus, the 112-residue chain is MSYRKLGRPSDQRRAMLRNLVTDFLRYERITTTEARAKEVRKIAEKMITLGKRGDLHARRQALAYILDESVVKKLFDDIAPRYKERNGGYTRIFKLGPRRGDGAPLAVIELV.

The protein belongs to the bacterial ribosomal protein bL17 family. As to quaternary structure, part of the 50S ribosomal subunit. Contacts protein L32.

The chain is Large ribosomal subunit protein bL17 from Caldanaerobacter subterraneus subsp. tengcongensis (strain DSM 15242 / JCM 11007 / NBRC 100824 / MB4) (Thermoanaerobacter tengcongensis).